Consider the following 250-residue polypeptide: 2,5-dichloro-2,5-cyclohexadiene-1,4-diol dehydrogenase LinX (250 aa).

NAD(+) contacts are provided by Asp38, Asp64, Val65, Tyr156, Lys160, Thr191, and Thr194. Tyr156 functions as the Proton acceptor in the catalytic mechanism.

The protein belongs to the short-chain dehydrogenases/reductases (SDR) family.

It catalyses the reaction 2,5-dichlorocyclohexa-2,5-dien-1,4-diol + NAD(+) = 2,5-dichlorohydroquinone + NADH + H(+). In terms of biological role, catalyzes the degradation of 2,5-dichloro-2,5-cyclohexadiene-1,4-diol (2,5-DDOL) into 2,5-dichlorohydroquinone (2,5-DCHQ) in vitro. LinX appears not to be involved in gamma-hexachlorocyclohexane (gamma-HCH) degradation pathway, in contrast to LinC which has the same enzymatic activity. The protein is 2,5-dichloro-2,5-cyclohexadiene-1,4-diol dehydrogenase LinX of Sphingobium indicum (strain DSM 16412 / CCM 7286 / MTCC 6364 / B90A).